Reading from the N-terminus, the 184-residue chain is UPF0179 protein Pcal_2106 (184 aa).

Positions 146-161 (GASSAGISQAPSRVPL) are enriched in low complexity. Residues 146 to 184 (GASSAGISQAPSRVPLSKPPSKSPSPQKSSPRGPTSRLP) form a disordered region.

This sequence belongs to the UPF0179 family.

This chain is UPF0179 protein Pcal_2106, found in Pyrobaculum calidifontis (strain DSM 21063 / JCM 11548 / VA1).